The sequence spans 491 residues: UDP-N-acetylmuramate--L-alanine ligase (491 aa).

126–132 (GTHGKTT) serves as a coordination point for ATP.

It belongs to the MurCDEF family.

It is found in the cytoplasm. The catalysed reaction is UDP-N-acetyl-alpha-D-muramate + L-alanine + ATP = UDP-N-acetyl-alpha-D-muramoyl-L-alanine + ADP + phosphate + H(+). It functions in the pathway cell wall biogenesis; peptidoglycan biosynthesis. Its function is as follows. Cell wall formation. This Escherichia coli (strain K12 / MC4100 / BW2952) protein is UDP-N-acetylmuramate--L-alanine ligase.